The chain runs to 41 residues: MADQPEKNPNTQPVELNRTSLYLGLLLVFVVGLLFSSYFLN.

The chain crosses the membrane as a helical span at residues 20–40 (SLYLGLLLVFVVGLLFSSYFL).

It belongs to the PsbL family. PSII is composed of 1 copy each of membrane proteins PsbA, PsbB, PsbC, PsbD, PsbE, PsbF, PsbH, PsbI, PsbJ, PsbK, PsbL, PsbM, PsbT, PsbX, PsbY, PsbZ, Psb30/Ycf12, peripheral proteins PsbO, CyanoQ (PsbQ), PsbU, PsbV and a large number of cofactors. It forms dimeric complexes.

It is found in the cellular thylakoid membrane. Its function is as follows. One of the components of the core complex of photosystem II (PSII). PSII is a light-driven water:plastoquinone oxidoreductase that uses light energy to abstract electrons from H(2)O, generating O(2) and a proton gradient subsequently used for ATP formation. It consists of a core antenna complex that captures photons, and an electron transfer chain that converts photonic excitation into a charge separation. This subunit is found at the monomer-monomer interface and is required for correct PSII assembly and/or dimerization. In Synechococcus sp. (strain JA-3-3Ab) (Cyanobacteria bacterium Yellowstone A-Prime), this protein is Photosystem II reaction center protein L.